Here is a 185-residue protein sequence, read N- to C-terminus: Large ribosomal subunit protein uL5 (185 aa).

The protein belongs to the universal ribosomal protein uL5 family. In terms of assembly, part of the 50S ribosomal subunit; part of the 5S rRNA/L5/L18/L25 subcomplex. Contacts the 5S rRNA and the P site tRNA. Forms a bridge to the 30S subunit in the 70S ribosome.

Its function is as follows. This is one of the proteins that bind and probably mediate the attachment of the 5S RNA into the large ribosomal subunit, where it forms part of the central protuberance. In the 70S ribosome it contacts protein S13 of the 30S subunit (bridge B1b), connecting the 2 subunits; this bridge is implicated in subunit movement. Contacts the P site tRNA; the 5S rRNA and some of its associated proteins might help stabilize positioning of ribosome-bound tRNAs. The polypeptide is Large ribosomal subunit protein uL5 (Streptomyces griseus subsp. griseus (strain JCM 4626 / CBS 651.72 / NBRC 13350 / KCC S-0626 / ISP 5235)).